Reading from the N-terminus, the 252-residue chain is Imidazole glycerol phosphate synthase subunit HisF (252 aa).

Active-site residues include D11 and D130.

Belongs to the HisA/HisF family. In terms of assembly, heterodimer of HisH and HisF.

The protein localises to the cytoplasm. The catalysed reaction is 5-[(5-phospho-1-deoxy-D-ribulos-1-ylimino)methylamino]-1-(5-phospho-beta-D-ribosyl)imidazole-4-carboxamide + L-glutamine = D-erythro-1-(imidazol-4-yl)glycerol 3-phosphate + 5-amino-1-(5-phospho-beta-D-ribosyl)imidazole-4-carboxamide + L-glutamate + H(+). Its pathway is amino-acid biosynthesis; L-histidine biosynthesis; L-histidine from 5-phospho-alpha-D-ribose 1-diphosphate: step 5/9. In terms of biological role, IGPS catalyzes the conversion of PRFAR and glutamine to IGP, AICAR and glutamate. The HisF subunit catalyzes the cyclization activity that produces IGP and AICAR from PRFAR using the ammonia provided by the HisH subunit. The protein is Imidazole glycerol phosphate synthase subunit HisF of Alkaliphilus metalliredigens (strain QYMF).